A 254-amino-acid chain; its full sequence is Undecaprenyl-diphosphatase 3 (254 aa).

A run of 8 helical transmembrane segments spans residues 8-28 (TEFL…LIGF), 33-53 (AKVF…VIFW), 74-94 (LHII…HSAI), 97-117 (VLFG…LMIV), 133-153 (ITYK…WPGF), 174-194 (AEYT…LDLI), 207-227 (LFAT…VSFL), and 233-253 (VKLT…YFFI).

Belongs to the UppP family.

It localises to the cell membrane. The enzyme catalyses di-trans,octa-cis-undecaprenyl diphosphate + H2O = di-trans,octa-cis-undecaprenyl phosphate + phosphate + H(+). In terms of biological role, catalyzes the dephosphorylation of undecaprenyl diphosphate (UPP). Confers resistance to bacitracin. This chain is Undecaprenyl-diphosphatase 3, found in Bacillus thuringiensis (strain Al Hakam).